We begin with the raw amino-acid sequence, 313 residues long: Adhesin MafA 2/3 (313 aa).

The first 14 residues, 1–14 (MKTLLLLIPLVLTA), serve as a signal peptide directing secretion. C15 is lipidated: N-palmitoyl cysteine. A lipid anchor (S-diacylglycerol cysteine) is attached at C15. Residues 282–298 (GDTTAQNRPDFKQNNGK) show a composition bias toward polar residues. A disordered region spans residues 282-313 (GDTTAQNRPDFKQNNGKNPDVGNEVIRRRKGG).

This sequence belongs to the MafA family.

It is found in the cell outer membrane. The sequence is that of Adhesin MafA 2/3 (mafA2) from Neisseria gonorrhoeae (strain ATCC 700825 / FA 1090).